The chain runs to 263 residues: Acyl-[acyl-carrier-protein]--UDP-N-acetylglucosamine O-acyltransferase (263 aa).

This sequence belongs to the transferase hexapeptide repeat family. LpxA subfamily. Homotrimer.

Its subcellular location is the cytoplasm. The enzyme catalyses a (3R)-hydroxyacyl-[ACP] + UDP-N-acetyl-alpha-D-glucosamine = a UDP-3-O-[(3R)-3-hydroxyacyl]-N-acetyl-alpha-D-glucosamine + holo-[ACP]. It participates in glycolipid biosynthesis; lipid IV(A) biosynthesis; lipid IV(A) from (3R)-3-hydroxytetradecanoyl-[acyl-carrier-protein] and UDP-N-acetyl-alpha-D-glucosamine: step 1/6. Its function is as follows. Involved in the biosynthesis of lipid A, a phosphorylated glycolipid that anchors the lipopolysaccharide to the outer membrane of the cell. The protein is Acyl-[acyl-carrier-protein]--UDP-N-acetylglucosamine O-acyltransferase of Stenotrophomonas maltophilia (strain R551-3).